The following is a 167-amino-acid chain: Small ribosomal subunit protein mS25 (167 aa).

Belongs to the mitochondrion-specific ribosomal protein mS25 family. Component of the mitochondrial ribosome small subunit (28S) which comprises a 12S rRNA and about 30 distinct proteins.

It is found in the mitochondrion. This is Small ribosomal subunit protein mS25 (mRpS25) from Drosophila melanogaster (Fruit fly).